The chain runs to 195 residues: Putative NADH dehydrogenase/NAD(P)H nitroreductase Bcep18194_B1060 (195 aa).

This sequence belongs to the nitroreductase family. HadB/RutE subfamily. FMN serves as cofactor.

The chain is Putative NADH dehydrogenase/NAD(P)H nitroreductase Bcep18194_B1060 from Burkholderia lata (strain ATCC 17760 / DSM 23089 / LMG 22485 / NCIMB 9086 / R18194 / 383).